The following is a 507-amino-acid chain: Anaerobic nitric oxide reductase transcription regulator NorR (507 aa).

The residue at position 57 (Asp57) is a 4-aspartylphosphate. The 230-residue stretch at 188-417 (IIGLSSVMQQ…LEHSIYRAAI (230 aa)) folds into the Sigma-54 factor interaction domain. Residues 216-223 (GETGVGKE) and 279-288 (ADNGTLFLDE) each bind ATP. Residues 483-502 (WAATARKLELDSGNLHRLAK) constitute a DNA-binding region (H-T-H motif).

It functions in the pathway nitrogen metabolism; nitric oxide reduction. Required for the expression of anaerobic nitric oxide (NO) reductase, acts as a transcriptional activator for at least the norVW operon. Activation also requires sigma-54. This Serratia proteamaculans (strain 568) protein is Anaerobic nitric oxide reductase transcription regulator NorR.